The sequence spans 388 residues: Protein kes1 (388 aa).

The protein belongs to the OSBP family.

Its function is as follows. Lipid transporter involved in lipid countertransport between the Golgi complex and membranes of the endoplasmic reticulum: specifically exchanges sterol with phosphatidylinositol 4-phosphate (PI4P), delivering sterol to the Golgi in exchange for PI4P, which is degraded by the SAC1 phosphatase in the endoplasmic reticulum. The protein is Protein kes1 (kes1) of Schizosaccharomyces pombe (strain 972 / ATCC 24843) (Fission yeast).